The primary structure comprises 1470 residues: Guanine nucleotide exchange factor subunit R06F6.8 (1470 aa).

WD repeat units lie at residues 20-58, 68-107, and 472-512; these read STAA…LLCS, ETRG…DEQC, and AYCS…VVGV. Disordered regions lie at residues 673–710, 975–1001, 1017–1045, and 1238–1259; these read QSQN…PMNQ, FFRT…ADSS, RLNK…SKDK, and RSPS…SPSS. The span at 689-707 shows a compositional bias: low complexity; it reads SNVSIQSVSTSTTSEPSSP. Residues 983–1001 show a composition bias toward polar residues; the sequence is AKTSLSRRPTVSSPSADSS. Residues 1028–1045 are compositionally biased toward basic and acidic residues; that stretch reads EQKDAPRKDSIGGSSKDK. Residues 1294–1314 form a helical membrane-spanning segment; that stretch reads LLLSLFSQTATIDWIFLFCLL. A compositionally biased stretch (basic and acidic residues) spans 1385–1403; sequence SPDNENRKASQKTSADDPK. Residues 1385-1447 form a disordered region; it reads SPDNENRKAS…SADRAHKSVK (63 aa). Residues 1411–1424 are compositionally biased toward polar residues; it reads SGSSKLNNSFSNPK. Basic and acidic residues predominate over residues 1431 to 1447; it reads GRRERSRSADRAHKSVK.

It belongs to the RIC1 family. Component of a guanine nucleotide exchange factor (GEF) complex.

It is found in the membrane. In terms of biological role, probable component of a guanine nucleotide exchange factor (GEF) that may be required for efficient fusion of endosome-derived vesicles with the Golgi. The polypeptide is Guanine nucleotide exchange factor subunit R06F6.8 (Caenorhabditis elegans).